The following is a 140-amino-acid chain: Nucleoside diphosphate kinase (140 aa).

Lysine 11, phenylalanine 59, arginine 87, threonine 93, arginine 104, and asparagine 114 together coordinate ATP. Histidine 117 acts as the Pros-phosphohistidine intermediate in catalysis.

This sequence belongs to the NDK family. Homotetramer. Requires Mg(2+) as cofactor.

Its subcellular location is the cytoplasm. The enzyme catalyses a 2'-deoxyribonucleoside 5'-diphosphate + ATP = a 2'-deoxyribonucleoside 5'-triphosphate + ADP. It carries out the reaction a ribonucleoside 5'-diphosphate + ATP = a ribonucleoside 5'-triphosphate + ADP. Functionally, major role in the synthesis of nucleoside triphosphates other than ATP. The ATP gamma phosphate is transferred to the NDP beta phosphate via a ping-pong mechanism, using a phosphorylated active-site intermediate. This is Nucleoside diphosphate kinase from Brucella anthropi (strain ATCC 49188 / DSM 6882 / CCUG 24695 / JCM 21032 / LMG 3331 / NBRC 15819 / NCTC 12168 / Alc 37) (Ochrobactrum anthropi).